Consider the following 317-residue polypeptide: 2,3-dihydroxyphenylpropionate/2,3-dihydroxicinnamic acid 1,2-dioxygenase (317 aa).

H115 acts as the Proton donor in catalysis. H179 serves as the catalytic Proton acceptor.

It belongs to the LigB/MhpB extradiol dioxygenase family. In terms of assembly, homotetramer. Requires Fe(2+) as cofactor.

It catalyses the reaction 3-(2,3-dihydroxyphenyl)propanoate + O2 = (2Z,4E)-2-hydroxy-6-oxonona-2,4-dienedioate + H(+). It carries out the reaction (2E)-3-(2,3-dihydroxyphenyl)prop-2-enoate + O2 = (2Z,4E,7E)-2-hydroxy-6-oxonona-2,4,7-trienedioate + H(+). Its pathway is aromatic compound metabolism; 3-phenylpropanoate degradation. Catalyzes the non-heme iron(II)-dependent oxidative cleavage of 2,3-dihydroxyphenylpropionic acid and 2,3-dihydroxicinnamic acid into 2-hydroxy-6-ketononadienedioate and 2-hydroxy-6-ketononatrienedioate, respectively. The polypeptide is 2,3-dihydroxyphenylpropionate/2,3-dihydroxicinnamic acid 1,2-dioxygenase (Paraburkholderia phymatum (strain DSM 17167 / CIP 108236 / LMG 21445 / STM815) (Burkholderia phymatum)).